A 102-amino-acid chain; its full sequence is uncharacterized protein (102 aa).

Residues 48–102 form the HTH cro/C1-type domain; that stretch reads LNDKRKSLGIELSMLELQTGVSISTLNRLFQDPSQVRFTTVFLVAQTLGVSLCAI. The segment at residues 59–78 is a DNA-binding region (H-T-H motif); sequence LSMLELQTGVSISTLNRLFQ.

This is an uncharacterized protein from Haemophilus influenzae (strain ATCC 51907 / DSM 11121 / KW20 / Rd).